A 338-amino-acid chain; its full sequence is Glycerol-3-phosphate dehydrogenase [NAD(P)+] (338 aa).

NADPH contacts are provided by Ser13, Trp14, and Lys108. 3 residues coordinate sn-glycerol 3-phosphate: Lys108, Gly139, and Ser141. Ala143 is an NADPH binding site. Residues Lys194, Asp247, Ser257, Arg258, and Asn259 each coordinate sn-glycerol 3-phosphate. Residue Lys194 is the Proton acceptor of the active site. Arg258 serves as a coordination point for NADPH. 2 residues coordinate NADPH: Val282 and Glu284.

It belongs to the NAD-dependent glycerol-3-phosphate dehydrogenase family.

Its subcellular location is the cytoplasm. It carries out the reaction sn-glycerol 3-phosphate + NAD(+) = dihydroxyacetone phosphate + NADH + H(+). It catalyses the reaction sn-glycerol 3-phosphate + NADP(+) = dihydroxyacetone phosphate + NADPH + H(+). Its pathway is membrane lipid metabolism; glycerophospholipid metabolism. Catalyzes the reduction of the glycolytic intermediate dihydroxyacetone phosphate (DHAP) to sn-glycerol 3-phosphate (G3P), the key precursor for phospholipid synthesis. In Streptococcus pyogenes serotype M2 (strain MGAS10270), this protein is Glycerol-3-phosphate dehydrogenase [NAD(P)+].